A 369-amino-acid polypeptide reads, in one-letter code: Endo-1,4-beta-xylanase A (369 aa).

A signal peptide spans 1 to 20 (MRKLTQFCLGLMLLPIAAVA). In terms of domain architecture, GH10 spans 21 to 367 (QNQPTMKDVL…KPVVKEIIKL (347 aa)). Residue glutamate 156 is the Proton donor of the active site. Glutamate 261 serves as the catalytic Nucleophile.

This sequence belongs to the glycosyl hydrolase 10 (cellulase F) family.

The enzyme catalyses Endohydrolysis of (1-&gt;4)-beta-D-xylosidic linkages in xylans.. Its pathway is glycan degradation; xylan degradation. This chain is Endo-1,4-beta-xylanase A (xynA), found in Xylanibacter ruminicola (Prevotella ruminicola).